We begin with the raw amino-acid sequence, 129 residues long: Glycine cleavage system H protein (129 aa).

Positions 24 to 106 (SYTVGISEHA…FGDGWFFRVM (83 aa)) constitute a Lipoyl-binding domain. The residue at position 65 (lysine 65) is an N6-lipoyllysine.

It belongs to the GcvH family. The glycine cleavage system is composed of four proteins: P, T, L and H. (R)-lipoate is required as a cofactor.

Its function is as follows. The glycine cleavage system catalyzes the degradation of glycine. The H protein shuttles the methylamine group of glycine from the P protein to the T protein. The polypeptide is Glycine cleavage system H protein (Shewanella halifaxensis (strain HAW-EB4)).